A 654-amino-acid chain; its full sequence is tRNA 5-methylaminomethyl-2-thiouridine biosynthesis bifunctional protein MnmC (654 aa).

The tract at residues 1–236 (MPTLLQHAQI…KWEVMSGAYV (236 aa)) is tRNA (mnm(5)s(2)U34)-methyltransferase. Residues 262-654 (IGAGLAGSSS…FGLRRLIRGK (393 aa)) are FAD-dependent cmnm(5)s(2)U34 oxidoreductase.

This sequence in the N-terminal section; belongs to the methyltransferase superfamily. tRNA (mnm(5)s(2)U34)-methyltransferase family. It in the C-terminal section; belongs to the DAO family. Requires FAD as cofactor.

The protein localises to the cytoplasm. The enzyme catalyses 5-aminomethyl-2-thiouridine(34) in tRNA + S-adenosyl-L-methionine = 5-methylaminomethyl-2-thiouridine(34) in tRNA + S-adenosyl-L-homocysteine + H(+). Catalyzes the last two steps in the biosynthesis of 5-methylaminomethyl-2-thiouridine (mnm(5)s(2)U) at the wobble position (U34) in tRNA. Catalyzes the FAD-dependent demodification of cmnm(5)s(2)U34 to nm(5)s(2)U34, followed by the transfer of a methyl group from S-adenosyl-L-methionine to nm(5)s(2)U34, to form mnm(5)s(2)U34. The sequence is that of tRNA 5-methylaminomethyl-2-thiouridine biosynthesis bifunctional protein MnmC from Pseudomonas putida (strain ATCC 47054 / DSM 6125 / CFBP 8728 / NCIMB 11950 / KT2440).